A 371-amino-acid polypeptide reads, in one-letter code: Anhydro-N-acetylmuramic acid kinase (371 aa).

9-16 is an ATP binding site; that stretch reads GTSMDGID.

This sequence belongs to the anhydro-N-acetylmuramic acid kinase family.

It carries out the reaction 1,6-anhydro-N-acetyl-beta-muramate + ATP + H2O = N-acetyl-D-muramate 6-phosphate + ADP + H(+). It functions in the pathway amino-sugar metabolism; 1,6-anhydro-N-acetylmuramate degradation. It participates in cell wall biogenesis; peptidoglycan recycling. In terms of biological role, catalyzes the specific phosphorylation of 1,6-anhydro-N-acetylmuramic acid (anhMurNAc) with the simultaneous cleavage of the 1,6-anhydro ring, generating MurNAc-6-P. Is required for the utilization of anhMurNAc either imported from the medium or derived from its own cell wall murein, and thus plays a role in cell wall recycling. The chain is Anhydro-N-acetylmuramic acid kinase from Azorhizobium caulinodans (strain ATCC 43989 / DSM 5975 / JCM 20966 / LMG 6465 / NBRC 14845 / NCIMB 13405 / ORS 571).